The following is a 185-amino-acid chain: MTAYLRPALSLALLMTLVTGALYPLAVTGIAQVAFPNQANGSLVRDAQGQVRGSALIAQDFQGDGWFHSRPSAGAYATVASGASNLSPSNPALAERVKGDAATLYQAQQGPVPQALLTTSGSGLDPHLPPEALAYQIPRVAAARQLPVERLQALLEQATLHPLIGPPVVNVLALNQALEKLAIVR.

A helical membrane pass occupies residues 11-31 (LALLMTLVTGALYPLAVTGIA).

This sequence belongs to the KdpC family. In terms of assembly, the system is composed of three essential subunits: KdpA, KdpB and KdpC.

It is found in the cell inner membrane. Functionally, part of the high-affinity ATP-driven potassium transport (or Kdp) system, which catalyzes the hydrolysis of ATP coupled with the electrogenic transport of potassium into the cytoplasm. This subunit acts as a catalytic chaperone that increases the ATP-binding affinity of the ATP-hydrolyzing subunit KdpB by the formation of a transient KdpB/KdpC/ATP ternary complex. This Pseudomonas putida (strain ATCC 47054 / DSM 6125 / CFBP 8728 / NCIMB 11950 / KT2440) protein is Potassium-transporting ATPase KdpC subunit.